Reading from the N-terminus, the 398-residue chain is GPI mannosyltransferase 1 (398 aa).

The next 9 membrane-spanning stretches (helical) occupy residues 4 to 24 (LKYLITFSILLRFGFFFFGLY), 79 to 99 (WYHFGKLLFMVSDVITGLIIL), 114 to 136 (MILSSIWLLNPMVITISTRGSAE), 156 to 176 (VILSAIWLGLSIHFKIYPIIY), 209 to 229 (IIITLTTLAVVNYLMFLKYGW), 271 to 291 (IEKIAFVPQLLLSAVIIPLIF), 305 to 325 (FVFVAFNKVITSQYFIWFLIF), 341 to 361 (ITGISCLLLWIISQATWLYFA), and 375 to 395 (GLMYSSVFFFLSNCWCTMKFI).

Belongs to the PIGM family.

It localises to the endoplasmic reticulum membrane. Its pathway is glycolipid biosynthesis; glycosylphosphatidylinositol-anchor biosynthesis. Its function is as follows. Mannosyltransferase involved in glycosylphosphatidylinositol-anchor biosynthesis. Transfers the first alpha-1,4-mannose to GlcN-acyl-PI during GPI precursor assembly. Required for cell wall integrity. This is GPI mannosyltransferase 1 (GPI14) from Candida albicans (strain SC5314 / ATCC MYA-2876) (Yeast).